A 420-amino-acid chain; its full sequence is L-rhamnose isomerase (420 aa).

Mn(2+) is bound by residues His-262, Asp-294, and Asp-296.

Belongs to the rhamnose isomerase family. Homotetramer. Requires Mn(2+) as cofactor.

It is found in the cytoplasm. It catalyses the reaction L-rhamnopyranose = L-rhamnulose. Its pathway is carbohydrate degradation; L-rhamnose degradation; glycerone phosphate from L-rhamnose: step 1/3. In terms of biological role, catalyzes the interconversion of L-rhamnose and L-rhamnulose. The polypeptide is L-rhamnose isomerase (Pectobacterium atrosepticum (strain SCRI 1043 / ATCC BAA-672) (Erwinia carotovora subsp. atroseptica)).